A 199-amino-acid polypeptide reads, in one-letter code: NAD(P)H dehydrogenase (quinone) (199 aa).

Residues Val4–Val190 form the Flavodoxin-like domain. FMN-binding positions include Ser10 to Met15 and Thr78 to Tyr80. NAD(+) is bound at residue Tyr12. Trp98 is a substrate binding site. Residues Ser113–Gly119 and His134 each bind FMN. The tract at residues Gly157 to Phe185 is disordered. Residues Met163–Glu177 show a composition bias toward polar residues.

It belongs to the WrbA family. It depends on FMN as a cofactor.

It carries out the reaction a quinone + NADH + H(+) = a quinol + NAD(+). The catalysed reaction is a quinone + NADPH + H(+) = a quinol + NADP(+). This is NAD(P)H dehydrogenase (quinone) from Brucella anthropi (strain ATCC 49188 / DSM 6882 / CCUG 24695 / JCM 21032 / LMG 3331 / NBRC 15819 / NCTC 12168 / Alc 37) (Ochrobactrum anthropi).